The following is a 263-amino-acid chain: Small ribosomal subunit protein eS4 (263 aa).

In terms of domain architecture, S4 RNA-binding spans 42–104; it reads LPLIIFLRNR…TGEHFRLVYD (63 aa).

This sequence belongs to the eukaryotic ribosomal protein eS4 family. Component of the small ribosomal subunit.

It is found in the cytoplasm. Functionally, component of the small ribosomal subunit. The ribosome is a large ribonucleoprotein complex responsible for the synthesis of proteins in the cell. This is Small ribosomal subunit protein eS4 (rps4) from Xenopus tropicalis (Western clawed frog).